The sequence spans 262 residues: MKLLEKMTYVECFMIIMATWFMFISYSHGANVAAAPGTNGLDTAWYDARAAYYGDIHGGGTELEGACGYGDLNKHGYGLATAALSTALFNSGASCGACYEIMCSPNPQGCLSGSIKITATDLCPPGSAWCYLPNKHFDLSLPMFIKIAQVKAKMVPVRYRRVPCAKTGGVKFEVKGNPNILTILPYNVGGAGDIIAVSAKGSKTAWVVMSRYWGQNWTTNVNLTGQSVSLRVTTSDGITKDFTDVMPASWGFGQTFDGKTNF.

The signal sequence occupies residues 1 to 29; the sequence is MKLLEKMTYVECFMIIMATWFMFISYSHG. Residues 64–169 enclose the Expansin-like EG45 domain; it reads EGACGYGDLN…RRVPCAKTGG (106 aa). In terms of domain architecture, Expansin-like CBD spans 179-258; it reads NILTILPYNV…SWGFGQTFDG (80 aa).

This sequence belongs to the expansin family. Expansin A subfamily.

The protein localises to the secreted. The protein resides in the cell wall. It localises to the membrane. In terms of biological role, causes loosening and extension of plant cell walls by disrupting non-covalent bonding between cellulose microfibrils and matrix glucans. No enzymatic activity has been found. The protein is Expansin-A21 (EXPA21) of Arabidopsis thaliana (Mouse-ear cress).